The primary structure comprises 524 residues: GMP synthase [glutamine-hydrolyzing] (524 aa).

Residues 9 to 207 (RILILDFSSQ…VIHICQCIPN (199 aa)) form the Glutamine amidotransferase type-1 domain. The active-site Nucleophile is Cys-86. Active-site residues include His-181 and Glu-183. In terms of domain architecture, GMPS ATP-PPase spans 208–399 (WTTKHIIEDS…LGLPADLIYR (192 aa)). ATP is bound at residue 235-241 (SGGVDSA).

In terms of assembly, homodimer.

The enzyme catalyses XMP + L-glutamine + ATP + H2O = GMP + L-glutamate + AMP + diphosphate + 2 H(+). It participates in purine metabolism; GMP biosynthesis; GMP from XMP (L-Gln route): step 1/1. Catalyzes the synthesis of GMP from XMP. The protein is GMP synthase [glutamine-hydrolyzing] of Coxiella burnetii (strain Dugway 5J108-111).